A 526-amino-acid polypeptide reads, in one-letter code: Vang-like protein 1 (526 aa).

Residues 1–15 show a composition bias toward low complexity; the sequence is MDTESTYSGYSYYSS. Residues 1-87 are disordered; sequence MDTESTYSGY…TTAITGTSEH (87 aa). Over 1–114 the chain is Cytoplasmic; sequence MDTESTYSGY…VGLDCKRYLG (114 aa). The segment covering 75-87 has biased composition (polar residues); it reads GETTTAITGTSEH. 2 positions are modified to phosphoserine: serine 88 and serine 90. The helical transmembrane segment at 115–135 threads the bilayer; the sequence is LTVASFLGLLVFLTPIAFILL. Topologically, residues 136-153 are extracellular; the sequence is PQILWREELKPCGAICEG. A helical membrane pass occupies residues 154–174; sequence LLISVSFKLLILLIGTWALFF. Over 175–184 the chain is Cytoplasmic; it reads RKQRADVPRV. A helical transmembrane segment spans residues 185-205; the sequence is FVFRALLLVLIFLFVVSYWLF. The Extracellular segment spans residues 206 to 224; it reads YGVRILDSRDQNYKDIVQY. Residues 225 to 245 traverse the membrane as a helical segment; that stretch reads AVSLVDALLFIHYLAIVLLEL. The Cytoplasmic segment spans residues 246–526; that stretch reads RQLQPMFTLQ…VLRLQSETSV (281 aa).

This sequence belongs to the Vang family. Heterodimer with Vangl2. Interacts through its C-terminal region with the N-terminal half of DVL1, DVL2 and DVL3. The PDZ domain of DVL1, DVL2 and DVL3 is required for the interaction.

Its subcellular location is the cell membrane. This Mus musculus (Mouse) protein is Vang-like protein 1 (Vangl1).